The sequence spans 368 residues: Carbamoyl phosphate synthase small chain (368 aa).

The CPSase stretch occupies residues 1-178; that stretch reads MKAVLGLEDG…GAECAWKGSG (178 aa). L-glutamine-binding residues include Ser45, Gly230, and Gly232. One can recognise a Glutamine amidotransferase type-1 domain in the interval 182–368; the sequence is HAVVVDLGIK…KVVKVLGGDL (187 aa). The active-site Nucleophile is the Cys257. Residues Phe258, Gln261, Asn299, Gly301, and Tyr302 each coordinate L-glutamine. Residues His342 and Glu344 contribute to the active site.

Belongs to the CarA family. Composed of two chains; the small (or glutamine) chain promotes the hydrolysis of glutamine to ammonia, which is used by the large (or ammonia) chain to synthesize carbamoyl phosphate. Tetramer of heterodimers (alpha,beta)4.

It catalyses the reaction hydrogencarbonate + L-glutamine + 2 ATP + H2O = carbamoyl phosphate + L-glutamate + 2 ADP + phosphate + 2 H(+). The enzyme catalyses L-glutamine + H2O = L-glutamate + NH4(+). Its pathway is amino-acid biosynthesis; L-arginine biosynthesis; carbamoyl phosphate from bicarbonate: step 1/1. The protein operates within pyrimidine metabolism; UMP biosynthesis via de novo pathway; (S)-dihydroorotate from bicarbonate: step 1/3. Its function is as follows. Small subunit of the glutamine-dependent carbamoyl phosphate synthetase (CPSase). CPSase catalyzes the formation of carbamoyl phosphate from the ammonia moiety of glutamine, carbonate, and phosphate donated by ATP, constituting the first step of 2 biosynthetic pathways, one leading to arginine and/or urea and the other to pyrimidine nucleotides. The small subunit (glutamine amidotransferase) binds and cleaves glutamine to supply the large subunit with the substrate ammonia. This Methanosarcina acetivorans (strain ATCC 35395 / DSM 2834 / JCM 12185 / C2A) protein is Carbamoyl phosphate synthase small chain.